A 352-amino-acid polypeptide reads, in one-letter code: Phenylalanine--tRNA ligase alpha subunit (352 aa).

Glu258 is a binding site for Mg(2+).

This sequence belongs to the class-II aminoacyl-tRNA synthetase family. Phe-tRNA synthetase alpha subunit type 1 subfamily. As to quaternary structure, tetramer of two alpha and two beta subunits. The cofactor is Mg(2+).

Its subcellular location is the cytoplasm. The catalysed reaction is tRNA(Phe) + L-phenylalanine + ATP = L-phenylalanyl-tRNA(Phe) + AMP + diphosphate + H(+). This is Phenylalanine--tRNA ligase alpha subunit from Staphylococcus epidermidis (strain ATCC 35984 / DSM 28319 / BCRC 17069 / CCUG 31568 / BM 3577 / RP62A).